The sequence spans 221 residues: MQARIDATLNEHNRPEGSVRLLPVTKFHPVEDIKILQEFGVTAVGENREQEARAKALELPDMDFHMIGQIQSKKANSIARWAAAVHSVDSEKIAEALGRGVALALDRGDRTSDELPCFIQLSLDGDPSRGGTPLSQVTQLADCISDTTHLRFEGLMCVPPLGWGPEKAFSQARDVLSGLEEHFDRSLEFSAGMSGDLVAAIKHGSTIVRVGTEILGNRPLA.

An N6-(pyridoxal phosphate)lysine modification is found at Lys-26.

The protein belongs to the pyridoxal phosphate-binding protein YggS/PROSC family.

Its function is as follows. Pyridoxal 5'-phosphate (PLP)-binding protein, which is involved in PLP homeostasis. The polypeptide is Pyridoxal phosphate homeostasis protein (Corynebacterium glutamicum (strain ATCC 13032 / DSM 20300 / JCM 1318 / BCRC 11384 / CCUG 27702 / LMG 3730 / NBRC 12168 / NCIMB 10025 / NRRL B-2784 / 534)).